The chain runs to 169 residues: GTP-dependent dephospho-CoA kinase (169 aa).

4 residues coordinate GTP: Asp45, Asp64, Lys66, and Glu121.

This sequence belongs to the GTP-dependent DPCK family.

The catalysed reaction is 3'-dephospho-CoA + GTP = GDP + CoA + H(+). It participates in cofactor biosynthesis; coenzyme A biosynthesis. In terms of biological role, catalyzes the GTP-dependent phosphorylation of the 3'-hydroxyl group of dephosphocoenzyme A to form coenzyme A (CoA). The chain is GTP-dependent dephospho-CoA kinase from Methanosphaera stadtmanae (strain ATCC 43021 / DSM 3091 / JCM 11832 / MCB-3).